Here is a 179-residue protein sequence, read N- to C-terminus: Auxin-induced protein IAA6 (179 aa).

Residues 13-17 (LRLGL) carry the EAR-like (transcriptional repression) motif. The disordered stretch occupies residues 31–52 (FSEIDGGVEENGGSGDRKSVDK). The 89-residue stretch at 75–163 (KMYMKVSMDG…KRLRIMKRSD (89 aa)) folds into the PB1 domain.

Belongs to the Aux/IAA family. As to quaternary structure, homodimers and heterodimers.

The protein resides in the nucleus. In terms of biological role, aux/IAA proteins are short-lived transcriptional factors that function as repressors of early auxin response genes at low auxin concentrations. Repression is thought to result from the interaction with auxin response factors (ARFs), proteins that bind to the auxin-responsive promoter element (AuxRE). Formation of heterodimers with ARF proteins may alter their ability to modulate early auxin response genes expression. In Pisum sativum (Garden pea), this protein is Auxin-induced protein IAA6 (IAA6).